The sequence spans 364 residues: Lysophosphatidic acid receptor 1 (364 aa).

Over 1–50 (MAAAFTSSPVVSQPQFTAMNEQQCFSNESIAFFYNRSGKYLATEWNTVTK) the chain is Extracellular. Intrachain disulfides connect C24–C190 and C188–C195. 2 N-linked (GlcNAc...) asparagine glycosylation sites follow: N27 and N35. Residue K39 coordinates a 1-acyl-sn-glycero-3-phosphate. Residues 51-75 (LVMGLGITVCIFIMLANLLVMVAIY) traverse the membrane as a helical segment. Residues 76-83 (VNRRFHFP) lie on the Cytoplasmic side of the membrane. Residues 84–107 (IYYLMANLAAADFFAGLAYFYLMF) traverse the membrane as a helical segment. Topologically, residues 108–121 (NTGPNTRRLTVSTW) are extracellular. Residues 122-144 (LLRQGLIDTSLTVSVANLLAIAI) form a helical membrane-spanning segment. Residue 124 to 129 (RQGLID) coordinates a 1-acyl-sn-glycero-3-phosphate. The Cytoplasmic segment spans residues 145–163 (ERHITVFRMQLHARMSNRR). Residues 164–184 (VVVVIVVIWTMAIVMGAIPSV) form a helical membrane-spanning segment. Residues 185-204 (GWNCICDIENCSNMAPLYSD) lie on the Extracellular side of the membrane. The helical transmembrane segment at 205-225 (SYLVFWAIFNLVTFVVMVVLY) threads the bilayer. W210 serves as a coordination point for a 1-acyl-sn-glycero-3-phosphate. The Cytoplasmic portion of the chain corresponds to 226–255 (AHIFGYVRQRTMRMSRHSSGPRRNRDTMMS). Residues 256 to 280 (LLKTVVIVLGAFIICWTPGLVLLLL) form a helical membrane-spanning segment. Over 281–294 (DVCCPQCDVLAYEK) the chain is Extracellular. C284 and C287 are oxidised to a cystine. Residues 295–315 (FFLLLAEFNSAMNPIIYSYRD) form a helical membrane-spanning segment. Residues 316–364 (KEMSATFRQILCCQRSENTSGPTEGSDRSASSLNHTILAGVHSNDHSVV) lie on the Cytoplasmic side of the membrane. S341 carries the phosphoserine modification. T351 is modified (phosphothreonine).

The protein belongs to the G-protein coupled receptor 1 family. In terms of assembly, interacts with RALA and GRK2. Interacts with GNAQ and GNA13. Interacts with CD14; the interaction is enhanced by exposure to bacterial lipopolysaccharide (LPS). In terms of processing, N-glycosylated.

The protein resides in the cell surface. Its subcellular location is the cell membrane. It localises to the endosome. In terms of biological role, receptor for lysophosphatidic acid (LPA). Plays a role in the reorganization of the actin cytoskeleton, cell migration, differentiation and proliferation, and thereby contributes to the responses to tissue damage and infectious agents. Activates downstream signaling cascades via the G(i)/G(o), G(12)/G(13), and G(q) families of heteromeric G proteins. Signaling inhibits adenylyl cyclase activity and decreases cellular cAMP levels. Signaling triggers an increase of cytoplasmic Ca(2+) levels. Activates RALA; this leads to the activation of phospholipase C (PLC) and the formation of inositol 1,4,5-trisphosphate. Signaling mediates activation of down-stream MAP kinases. Contributes to the regulation of cell shape. Promotes Rho-dependent reorganization of the actin cytoskeleton in neuronal cells and neurite retraction. Promotes the activation of Rho and the formation of actin stress fibers. Promotes formation of lamellipodia at the leading edge of migrating cells via activation of RAC1. Through its function as LPA receptor, plays a role in chemotaxis and cell migration, including responses to injury and wounding. Plays a role in triggering inflammation in response to bacterial lipopolysaccharide (LPS) via its interaction with CD14. Promotes cell proliferation in response to LPA. Inhibits the intracellular ciliogenesis pathway in response to LPA and through AKT1 activation. Required for normal skeleton development. May play a role in osteoblast differentiation. Required for normal brain development. Required for normal proliferation, survival and maturation of newly formed neurons in the adult dentate gyrus. Plays a role in pain perception and in the initiation of neuropathic pain. This chain is Lysophosphatidic acid receptor 1 (LPAR1), found in Bos taurus (Bovine).